Reading from the N-terminus, the 2187-residue chain is Non-reducing polyketide synthase phnA (2187 aa).

The segment at 17-255 (LLFGDLSLAH…KYLDIDSPYH (239 aa)) is N-terminal acylcarrier protein transacylase domain (SAT). The Ketosynthase family 3 (KS3) domain occupies 383–819 (HSKIAIVGYS…GGNTAMLIED (437 aa)). Residues Cys-555, His-690, and His-735 each act as for beta-ketoacyl synthase activity in the active site. The interval 926-1226 (RVAFAFTGQG…GMVKGTIDSR (301 aa)) is malonyl-CoA:ACP transacylase (MAT) domain. The For acyl/malonyl transferase activity role is filled by Ser-1021. Positions 1321–1637 (PCAQQIVEEF…PRRALDHLLP (317 aa)) are product template (PT) domain. The segment at 1324–1458 (QQIVEEFHDS…LDVVLYPGQQ (135 aa)) is N-terminal hotdog fold. The PKS/mFAS DH domain occupies 1324–1633 (QQIVEEFHDS…FQGVPRRALD (310 aa)). His-1356 (proton acceptor; for dehydratase activity) is an active-site residue. Residues 1486–1633 (TETHLIKRGM…FQGVPRRALD (148 aa)) form a C-terminal hotdog fold region. Asp-1546 serves as the catalytic Proton donor; for dehydratase activity. Low complexity predominate over residues 1652–1669 (KAPVAAVAPPRTPTKAAP). The interval 1652-1681 (KAPVAAVAPPRTPTKAAPQSRQAAPKQKRS) is disordered. 2 consecutive Carrier domains span residues 1684–1758 (SDVF…SNSD) and 1796–1874 (SSES…YNVM). Ser-1718 bears the O-(pantetheine 4'-phosphoryl)serine mark. Residues 1754 to 1796 (LSNSDEDDTPSGDSSTYEDSESQITSPASSVGPETPGGGEFGS) are disordered. Residues 1757–1774 (SDEDDTPSGDSSTYEDSE) show a composition bias toward acidic residues. Position 1834 is an O-(pantetheine 4'-phosphoryl)serine (Ser-1834). A thioesterase (TE) domain region spans residues 1906 to 2183 (SSLPQATSIL…PEMGEAVAEF (278 aa)). Ser-2009 serves as the catalytic For thioesterase activity.

The catalysed reaction is 6 malonyl-CoA + acetyl-CoA + 5 H(+) = 3,6,7,9-tetrahydroxy-3-methyl-2,3-dihydro-1H-naphtho[2,1-b]pyran-1-one + 6 CO2 + 7 CoA + H2O. It functions in the pathway secondary metabolite biosynthesis. Non-reducing polyketide synthase; part of the gene cluster that mediates the biosynthesis of phenalenones such as herqueinone, compounds that have been reported to treat tumors, bacterial infections and/or mycoses, and rheumatic diseases. The non-reducing polyketide synthase phnA synthesizes the heptaketide backbone and cyclizes it into the angular, hemiketal-containing naphtho-gamma-pyrone prephenalenone. The product template (PT) domain of phnA catalyzes only the C4-C9 aldol condensation, which is unprecedented among known PT domains. The transformation of prephenalenone to phenalenones requires an FAD-dependent monooxygenase phnB, which catalyzes the C2 aromatic hydroxylation of prephenalenone and ring opening of the gamma-pyrone ring simultaneously. Subsequent intramolecular deprotonation of C3 phenolic oxygen accelerates phenalenone ring closure to yield the tricyclic phenalenone core with a C2 hydroxylation. The prenyltransferase phnF further catalyzes reverse C-prenylation of phenalenone by direct electrophilic substitution at C6, or possibly via first a forward O-prenylation of a neighboring phenol in phenalenone, followed by a Claisen rearrangement. The hydroalkoxylation enzyme phnH catalyzes the 5-exo-trig cyclization via acid catalysis after the spontaneous deprotonation of 7-OH, which leads to the formation of the dihydrobenzofuran atrovenetin. Atrovenetin is further converted to deoxyherqueinone by the O-methyltransferase phnC which can methylate C2-OH to stabilize the northern portion of the phenalenone core. Finally, the oxidoreductase phnG converts deoxyherqueinone to herqueinone via C6 hydroxylation. The chain is Non-reducing polyketide synthase phnA from Penicillium herquei.